Consider the following 309-residue polypeptide: Anamorsin homolog (309 aa).

The interval 4 to 169 (VSPGHSVLLL…SYEVGSSAQL (166 aa)) is N-terminal SAM-like domain. Positions 170–218 (TLSFAKKKQVEKPKLDENTAKIWSLSAVDMNDDDIDLLDPDELLDEEDL) are linker. The [2Fe-2S] cluster site is built by Cys230, Cys242, Cys245, and Cys247. The tract at residues 230–247 (CGTGGDTKKRKACKNCTC) is fe-S binding site A. [4Fe-4S] cluster contacts are provided by Cys270, Cys273, Cys281, and Cys284. 2 consecutive short sequence motifs (cx2C motif) follow at residues 270–273 (CGNC) and 281–284 (CASC). The tract at residues 270-284 (CGNCYLGDAFRCASC) is fe-S binding site B.

The protein belongs to the anamorsin family. As to quaternary structure, monomer. It depends on [2Fe-2S] cluster as a cofactor. Requires [4Fe-4S] cluster as cofactor.

The protein localises to the cytoplasm. The protein resides in the mitochondrion intermembrane space. In terms of biological role, component of the cytosolic iron-sulfur (Fe-S) protein assembly (CIA) machinery. Required for the maturation of extramitochondrial Fe-S proteins. Part of an electron transfer chain functioning in an early step of cytosolic Fe-S biogenesis, facilitating the de novo assembly of a [4Fe-4S] cluster on the cytosolic Fe-S scaffold complex. Electrons are transferred from NADPH via a FAD- and FMN-containing diflavin oxidoreductase. Together with the diflavin oxidoreductase, also required for the assembly of the diferric tyrosyl radical cofactor of ribonucleotide reductase (RNR), probably by providing electrons for reduction during radical cofactor maturation in the catalytic small subunit. This is Anamorsin homolog from Branchiostoma floridae (Florida lancelet).